The chain runs to 166 residues: Phospholipase A2 inhibitor A1 (166 aa).

A signal peptide spans 1–19; the sequence is MRLILLSGLLLLGIFLANG. Residues 46-161 enclose the C-type lectin domain; it reads LKGSFLIVHK…CDDNLLVVCE (116 aa). 2 cysteine pairs are disulfide-bonded: C83/C160 and C138/C152. N-linked (GlcNAc...) asparagine glycosylation occurs at N122.

It belongs to the alpha-type phospholipase A2 inhibitor family. Homotrimer; non-covalently linked. As to expression, expressed by the liver.

The protein resides in the secreted. In terms of biological role, this phospholipase A2 inhibitor binds directly phospholipase A2 in the presence or absence of calcium. The chain is Phospholipase A2 inhibitor A1 from Bothrops neuwiedi (Neuwied's lancehead).